The following is a 320-amino-acid chain: o-succinylbenzoate synthase (320 aa).

Lysine 133 (proton donor) is an active-site residue. Mg(2+) is bound by residues aspartate 161, glutamate 190, and aspartate 213. Lysine 235 acts as the Proton acceptor in catalysis.

It belongs to the mandelate racemase/muconate lactonizing enzyme family. MenC type 1 subfamily. Requires a divalent metal cation as cofactor.

The catalysed reaction is (1R,6R)-6-hydroxy-2-succinyl-cyclohexa-2,4-diene-1-carboxylate = 2-succinylbenzoate + H2O. Its pathway is quinol/quinone metabolism; 1,4-dihydroxy-2-naphthoate biosynthesis; 1,4-dihydroxy-2-naphthoate from chorismate: step 4/7. The protein operates within quinol/quinone metabolism; menaquinone biosynthesis. Converts 2-succinyl-6-hydroxy-2,4-cyclohexadiene-1-carboxylate (SHCHC) to 2-succinylbenzoate (OSB). The polypeptide is o-succinylbenzoate synthase (Escherichia coli O9:H4 (strain HS)).